We begin with the raw amino-acid sequence, 248 residues long: 4-hydroxy-tetrahydrodipicolinate reductase (248 aa).

NAD(+) is bound by residues 9-14, 77-79, and 104-107; these read GAKGRV, GTT, and APNF. Catalysis depends on His-134, which acts as the Proton donor/acceptor. A (S)-2,3,4,5-tetrahydrodipicolinate-binding site is contributed by His-135. The active-site Proton donor is the Lys-138. Residue 144–145 participates in (S)-2,3,4,5-tetrahydrodipicolinate binding; that stretch reads GT.

Belongs to the DapB family.

The protein resides in the cytoplasm. It carries out the reaction (S)-2,3,4,5-tetrahydrodipicolinate + NAD(+) + H2O = (2S,4S)-4-hydroxy-2,3,4,5-tetrahydrodipicolinate + NADH + H(+). It catalyses the reaction (S)-2,3,4,5-tetrahydrodipicolinate + NADP(+) + H2O = (2S,4S)-4-hydroxy-2,3,4,5-tetrahydrodipicolinate + NADPH + H(+). It participates in amino-acid biosynthesis; L-lysine biosynthesis via DAP pathway; (S)-tetrahydrodipicolinate from L-aspartate: step 4/4. Its function is as follows. Catalyzes the conversion of 4-hydroxy-tetrahydrodipicolinate (HTPA) to tetrahydrodipicolinate. In Corynebacterium glutamicum (strain R), this protein is 4-hydroxy-tetrahydrodipicolinate reductase.